A 396-amino-acid polypeptide reads, in one-letter code: Tryptophan synthase beta chain (396 aa).

Lysine 86 bears the N6-(pyridoxal phosphate)lysine mark.

This sequence belongs to the TrpB family. Tetramer of two alpha and two beta chains. Pyridoxal 5'-phosphate is required as a cofactor.

It carries out the reaction (1S,2R)-1-C-(indol-3-yl)glycerol 3-phosphate + L-serine = D-glyceraldehyde 3-phosphate + L-tryptophan + H2O. The protein operates within amino-acid biosynthesis; L-tryptophan biosynthesis; L-tryptophan from chorismate: step 5/5. Its function is as follows. The beta subunit is responsible for the synthesis of L-tryptophan from indole and L-serine. This Francisella tularensis subsp. novicida (strain U112) protein is Tryptophan synthase beta chain.